We begin with the raw amino-acid sequence, 618 residues long: Beta-glucosidase C (618 aa).

A signal peptide spans 1 to 19 (MRVDSTVLALVALATDCLG). 5 N-linked (GlcNAc...) asparagine glycosylation sites follow: Asn-40, Asn-82, Asn-104, Asn-211, and Asn-263. Asp-330 is a catalytic residue. Residues Asn-417, Asn-448, Asn-477, Asn-482, Asn-502, and Asn-517 are each glycosylated (N-linked (GlcNAc...) asparagine).

It belongs to the glycosyl hydrolase 3 family.

It localises to the secreted. The catalysed reaction is Hydrolysis of terminal, non-reducing beta-D-glucosyl residues with release of beta-D-glucose.. It functions in the pathway glycan metabolism; cellulose degradation. Functionally, beta-glucosidases are one of a number of cellulolytic enzymes involved in the degradation of cellulosic biomass. Catalyzes the last step releasing glucose from the inhibitory cellobiose. This Emericella nidulans (strain FGSC A4 / ATCC 38163 / CBS 112.46 / NRRL 194 / M139) (Aspergillus nidulans) protein is Beta-glucosidase C (bglC).